The sequence spans 207 residues: MRLIRMLLATALTFSVIPAHADGKDVARLTQLLEKSQTLTARFSQLTLDGGGTQLQETTGEMALQRPGLFNWHTDAPQEQLMVSDGKKVSLWDPDLEQVTIKKLDQRLTQTPALLLSGDVSKISESFDITAKEAGGVIDFMLKPKTKDTLFDSLRLSFRNGIINDMQLIDSVGQRTNILFTGVKANESIAASKFQFQIPKGADVIQE.

The N-terminal stretch at 1 to 21 (MRLIRMLLATALTFSVIPAHA) is a signal peptide.

Belongs to the LolA family. In terms of assembly, monomer.

Its subcellular location is the periplasm. Its function is as follows. Participates in the translocation of lipoproteins from the inner membrane to the outer membrane. Only forms a complex with a lipoprotein if the residue after the N-terminal Cys is not an aspartate (The Asp acts as a targeting signal to indicate that the lipoprotein should stay in the inner membrane). The sequence is that of Outer-membrane lipoprotein carrier protein from Pseudomonas syringae pv. tomato (strain ATCC BAA-871 / DC3000).